A 151-amino-acid polypeptide reads, in one-letter code: MKFFTVLLFVSLAATSLALLPGSKDELQMKTQPTDAIPAAQSTPTSYTSEESTSSKDLSKEPSIFREELISKDNVVIESTKPENQEAQDGLRSGSSQLEETTRPTTSAATTSEENLTKSSQTVEEELGKIIEGFVTGAEDIISGASRITKS.

A signal peptide spans 1-19 (MKFFTVLLFVSLAATSLAL). The interval 29–123 (MKTQPTDAIP…ENLTKSSQTV (95 aa)) is disordered. Low complexity predominate over residues 42–52 (STPTSYTSEES). The span at 53-71 (TSSKDLSKEPSIFREELIS) shows a compositional bias: basic and acidic residues. Ser54, Ser59, Ser63, and Ser71 each carry phosphoserine. A compositionally biased stretch (low complexity) spans 103-114 (RPTTSAATTSEE). Asn115 carries N-linked (GlcNAc...) asparagine glycosylation.

Belongs to the PP3/GlyCAM-1 family. In terms of processing, extensively O-glycosylated. As to expression, lymph nodes. Associated with the lumenal surface of the high endothelial venules of peripheral lymph nodes.

The protein localises to the cell membrane. Adhesion molecule that accomplishes cell binding by presenting carbohydrate(s) to the lectin domain of L-selectin. The polypeptide is Glycosylation-dependent cell adhesion molecule 1 (Glycam1) (Mus musculus (Mouse)).